Reading from the N-terminus, the 180-residue chain is UPF0227 protein YpsIP31758_1593 (180 aa).

This sequence belongs to the UPF0227 family.

The sequence is that of UPF0227 protein YpsIP31758_1593 from Yersinia pseudotuberculosis serotype O:1b (strain IP 31758).